Reading from the N-terminus, the 423-residue chain is UDP-N-acetylglucosamine 1-carboxyvinyltransferase (423 aa).

22 to 23 is a phosphoenolpyruvate binding site; it reads KN. Arg-98 serves as a coordination point for UDP-N-acetyl-alpha-D-glucosamine. The active-site Proton donor is Cys-122. Residue Cys-122 is modified to 2-(S-cysteinyl)pyruvic acid O-phosphothioketal. UDP-N-acetyl-alpha-D-glucosamine-binding positions include 127–131, Asp-311, and Ile-333; that span reads RPVDQ.

Belongs to the EPSP synthase family. MurA subfamily.

Its subcellular location is the cytoplasm. It catalyses the reaction phosphoenolpyruvate + UDP-N-acetyl-alpha-D-glucosamine = UDP-N-acetyl-3-O-(1-carboxyvinyl)-alpha-D-glucosamine + phosphate. It functions in the pathway cell wall biogenesis; peptidoglycan biosynthesis. Cell wall formation. Adds enolpyruvyl to UDP-N-acetylglucosamine. This Stenotrophomonas maltophilia (strain R551-3) protein is UDP-N-acetylglucosamine 1-carboxyvinyltransferase.